We begin with the raw amino-acid sequence, 299 residues long: NmrA-like family domain-containing protein 1 (299 aa).

NADP(+)-binding positions include 11-16, 37-41, 58-59, 79-81, Lys92, Lys133, and 155-158; these read GATGAQ, RDPGQ, DQ, TNY, and YFEN. The segment at 153–189 is interaction with ASS1; that stretch reads PCYFENLLSYFLPQKAPDGRSYLLSLPMGDVPIDGMS.

The protein belongs to the NmrA-type oxidoreductase family. In terms of assembly, homodimer. Interacts with ASS1. Interaction is enhanced by low NADPH/NADP(+) ratios, which results in inhibition of ASS1 activity.

The protein resides in the cytoplasm. The protein localises to the perinuclear region. It localises to the nucleus. Functionally, redox sensor protein. Undergoes restructuring and subcellular redistribution in response to changes in intracellular NADPH/NADP(+) levels. At low NADPH concentrations the protein is found mainly as a monomer, and binds argininosuccinate synthase (ASS1), the enzyme involved in nitric oxide synthesis. Association with ASS1 impairs its activity and reduces the production of nitric oxide, which subsecuently prevents apoptosis. Under normal NADPH concentrations, the protein is found as a dimer and hides the binding site for ASS1. The homodimer binds one molecule of NADPH. Has higher affinity for NADPH than for NADP(+). Binding to NADPH is necessary to form a stable dimer. This is NmrA-like family domain-containing protein 1 (NMRAL1) from Bos taurus (Bovine).